We begin with the raw amino-acid sequence, 167 residues long: uncharacterized protein (167 aa).

To B.subtilis XkdI.

This is an uncharacterized protein from Bacillus subtilis (strain 168).